Here is a 338-residue protein sequence, read N- to C-terminus: Holliday junction branch migration complex subunit RuvB (338 aa).

Positions 1–181 are large ATPase domain (RuvB-L); the sequence is MDRIVEIEKV…FGMDFRLQFY (181 aa). Residues L20, R21, G62, K65, T66, T67, 128–130, R171, Y181, and R218 each bind ATP; that span reads EDF. T66 provides a ligand contact to Mg(2+). The interval 182-252 is small ATPAse domain (RuvB-S); sequence STAELSRIIQ…RAKEGLNALG (71 aa). The head domain (RuvB-H) stretch occupies residues 255-338; the sequence is SLGFDEMDIK…NRTKGLFDGE (84 aa). Residues R309 and R314 each contribute to the DNA site.

The protein belongs to the RuvB family. As to quaternary structure, homohexamer. Forms an RuvA(8)-RuvB(12)-Holliday junction (HJ) complex. HJ DNA is sandwiched between 2 RuvA tetramers; dsDNA enters through RuvA and exits via RuvB. An RuvB hexamer assembles on each DNA strand where it exits the tetramer. Each RuvB hexamer is contacted by two RuvA subunits (via domain III) on 2 adjacent RuvB subunits; this complex drives branch migration. In the full resolvosome a probable DNA-RuvA(4)-RuvB(12)-RuvC(2) complex forms which resolves the HJ.

It is found in the cytoplasm. The catalysed reaction is ATP + H2O = ADP + phosphate + H(+). In terms of biological role, the RuvA-RuvB-RuvC complex processes Holliday junction (HJ) DNA during genetic recombination and DNA repair, while the RuvA-RuvB complex plays an important role in the rescue of blocked DNA replication forks via replication fork reversal (RFR). RuvA specifically binds to HJ cruciform DNA, conferring on it an open structure. The RuvB hexamer acts as an ATP-dependent pump, pulling dsDNA into and through the RuvAB complex. RuvB forms 2 homohexamers on either side of HJ DNA bound by 1 or 2 RuvA tetramers; 4 subunits per hexamer contact DNA at a time. Coordinated motions by a converter formed by DNA-disengaged RuvB subunits stimulates ATP hydrolysis and nucleotide exchange. Immobilization of the converter enables RuvB to convert the ATP-contained energy into a lever motion, pulling 2 nucleotides of DNA out of the RuvA tetramer per ATP hydrolyzed, thus driving DNA branch migration. The RuvB motors rotate together with the DNA substrate, which together with the progressing nucleotide cycle form the mechanistic basis for DNA recombination by continuous HJ branch migration. Branch migration allows RuvC to scan DNA until it finds its consensus sequence, where it cleaves and resolves cruciform DNA. The protein is Holliday junction branch migration complex subunit RuvB of Campylobacter curvus (strain 525.92).